Here is a 373-residue protein sequence, read N- to C-terminus: ATP phosphoribosyltransferase regulatory subunit (373 aa).

The protein belongs to the class-II aminoacyl-tRNA synthetase family. HisZ subfamily. As to quaternary structure, heteromultimer composed of HisG and HisZ subunits.

Its subcellular location is the cytoplasm. It participates in amino-acid biosynthesis; L-histidine biosynthesis; L-histidine from 5-phospho-alpha-D-ribose 1-diphosphate: step 1/9. Its function is as follows. Required for the first step of histidine biosynthesis. May allow the feedback regulation of ATP phosphoribosyltransferase activity by histidine. This is ATP phosphoribosyltransferase regulatory subunit from Rhizobium etli (strain CIAT 652).